Here is a 330-residue protein sequence, read N- to C-terminus: MTHFNKGPSYGLSAEVKNKIASKYDQQAEEDLRNWIEEVTGLGIGTNFQLGLKDGIILCELINKLQPGSVKKVNESSLNWPQLENIGNFIKAIQAYGMKPHDIFEANDLFENGNMTQVQTTLVALAGLAKTKGFHTTIDIGVKYAEKQTRRFDEGKLKAGQSVIGLQMGTNKCASQAGMTAYGTRRHLYDPKMQTDKPFDQTTISLQMGTNKGASQAGMLAPGTRRDIYDQKLTLQPVDNSTISLQMGTNKVASQKGMSVYGLGRQVYDPKYCAAPTEPVIHNGSQGTGTNGSEISDSDYQAEYPDEYHGEYPDDYPREYQYGDDQGIDY.

The residue at position 23 (lysine 23) is an N6-acetyllysine. Residues glutamine 26 to lysine 130 form the Calponin-homology (CH) domain. An N6-methyllysine modification is found at lysine 158. 3 Calponin-like repeats span residues isoleucine 164–tyrosine 189, isoleucine 204–tyrosine 229, and isoleucine 243–tyrosine 268. The tract at residues proline 279–tyrosine 330 is disordered. The span at aspartate 306–arginine 318 shows a compositional bias: basic and acidic residues.

The protein belongs to the calponin family.

Its function is as follows. Thin filament-associated protein that is implicated in the regulation and modulation of smooth muscle contraction. It is capable of binding to actin, calmodulin and tropomyosin. The interaction of calponin with actin inhibits the actomyosin Mg-ATPase activity. The polypeptide is Calponin-3 (Cnn3) (Mus musculus (Mouse)).